Here is a 608-residue protein sequence, read N- to C-terminus: Probable cytosolic Fe-S cluster assembly factor SPAC806.02c (608 aa).

An ATP-binding site is contributed by 13 to 20; sequence GKGGVGKS. Positions 201 and 204 each coordinate [4Fe-4S] cluster. WD repeat units follow at residues 288–327, 331–371, 376–415, 421–460, 465–504, 529–567, and 576–608; these read GHTG…LVHV, FHTR…WECT, GHEN…EFDC, EHTQ…WALT, GHTN…EDVA, IHKG…EALW, and AHGV…WSFK.

The protein in the N-terminal section; belongs to the Mrp/NBP35 ATP-binding proteins family. NUBP2/CFD1 subfamily. It in the C-terminal section; belongs to the WD repeat CIA1 family. As to quaternary structure, heterotetramer of 2 nbp35 and 2 SPAC806.02c chains. The cofactor is [4Fe-4S] cluster.

It is found in the cytoplasm. The protein resides in the nucleus. Functionally, fusion protein of two essential components of the cytosolic iron-sulfur (Fe/S) protein assembly (CIA) machinery. Required for maturation of extramitochondrial Fe-S proteins. May form a heterotetramer with nubp35, functioning as a Fe-S scaffold complex, mediating the de novo assembly of an Fe-S cluster and its transfer to target apoproteins. This is Probable cytosolic Fe-S cluster assembly factor SPAC806.02c from Schizosaccharomyces pombe (strain 972 / ATCC 24843) (Fission yeast).